A 156-amino-acid polypeptide reads, in one-letter code: Histone H2B.2 (156 aa).

2 stretches are compositionally biased toward basic and acidic residues: residues 1-10 and 24-58; these read MAPKKDEKPA and AKAEAKPKAEKAAKKAKKEPAKKAAKEPKGDGEKK. The interval 1-63 is disordered; it reads MAPKKDEKPA…DGEKKDKKKK (63 aa). An N6-acetyllysine mark is found at K40 and K41. Residue K152 forms a Glycyl lysine isopeptide (Lys-Gly) (interchain with G-Cter in ubiquitin) linkage.

Belongs to the histone H2B family. In terms of assembly, the nucleosome is a histone octamer containing two molecules each of H2A, H2B, H3 and H4 assembled in one H3-H4 heterotetramer and two H2A-H2B heterodimers. The octamer wraps approximately 147 bp of DNA. In terms of processing, the N-terminus is blocked. Post-translationally, can be acetylated to form H2BK33ac and H2BK34ac. Acetylated mainly on the ubiquitinated form. Monoubiquitinated to form H2BK143ub1; which is increased during the light period and may give a specific tag for epigenetic transcriptional activation.

The protein localises to the nucleus. The protein resides in the chromosome. Functionally, core component of nucleosome. Nucleosomes wrap and compact DNA into chromatin, limiting DNA accessibility to the cellular machineries which require DNA as a template. Histones thereby play a central role in transcription regulation, DNA repair, DNA replication and chromosomal stability. DNA accessibility is regulated via a complex set of post-translational modifications of histones, also called histone code, and nucleosome remodeling. This Chlamydomonas reinhardtii (Chlamydomonas smithii) protein is Histone H2B.2.